Here is a 182-residue protein sequence, read N- to C-terminus: Nucleoid-associated protein At2g24020, chloroplastic (182 aa).

Residues 1–48 (MASMAATTNFTKSMLFPFSHVSGNASLNSQRRTWPKQYKSKNGYRSLR) constitute a chloroplast transit peptide.

Belongs to the YbaB/EbfC family. As to quaternary structure, homodimer. Interacts with ALB3 and ALB4.

The protein resides in the plastid. It is found in the chloroplast stroma. Functionally, participates with ALB4 in thylakoid protein targeting. May function with specific subset of thylakoidal proteins. Binds to DNA and alters its conformation. May be involved in regulation of gene expression, nucleoid organization and DNA protection. The polypeptide is Nucleoid-associated protein At2g24020, chloroplastic (Arabidopsis thaliana (Mouse-ear cress)).